The following is a 108-amino-acid chain: Large ribosomal subunit protein bL31B (108 aa).

The tract at residues 88-108 (AAVEEAPAVKSKKKAPIKKKK) is disordered. Positions 97 to 108 (KSKKKAPIKKKK) are enriched in basic residues.

The protein belongs to the bacterial ribosomal protein bL31 family. Type B subfamily. As to quaternary structure, part of the 50S ribosomal subunit.

The chain is Large ribosomal subunit protein bL31B from Chlamydia abortus (strain DSM 27085 / S26/3) (Chlamydophila abortus).